The chain runs to 44 residues: GKVWDWIKSAAKKIWSSEPVSQLKGQVLNAAKNYVAEKIGATPT.

In terms of tissue distribution, expressed by the venom gland.

It is found in the secreted. Its subcellular location is the target cell membrane. Its function is as follows. Disrupts cell membranes through formation of pores. Strong antimicrobial activity against Gram-positive bacteria B.subtilis, S.epidermidis, E.faecalis and S.aureus. Less active against Gram-negative bacteria P.aeruginosa and E.coli. Has no antifungal or hemolytic activity. This chain is Pandinin-1, found in Pandinus imperator (Emperor scorpion).